The primary structure comprises 203 residues: Holliday junction branch migration complex subunit RuvA (203 aa).

Residues 1–64 are domain I; sequence MIGRLRGIIL…EDAQLLYGFN (64 aa). The domain II stretch occupies residues 65-142; sequence NKQERTLFKE…KGLHGDLFTP (78 aa). A flexible linker region spans residues 143 to 154; the sequence is AADLVLTSPASP. Positions 155-203 are domain III; sequence ATDDAEQEAVAALVALGYKPQEASRMVSKIARPDASSETLIREALRAAL.

The protein belongs to the RuvA family. In terms of assembly, homotetramer. Forms an RuvA(8)-RuvB(12)-Holliday junction (HJ) complex. HJ DNA is sandwiched between 2 RuvA tetramers; dsDNA enters through RuvA and exits via RuvB. An RuvB hexamer assembles on each DNA strand where it exits the tetramer. Each RuvB hexamer is contacted by two RuvA subunits (via domain III) on 2 adjacent RuvB subunits; this complex drives branch migration. In the full resolvosome a probable DNA-RuvA(4)-RuvB(12)-RuvC(2) complex forms which resolves the HJ.

The protein resides in the cytoplasm. Its function is as follows. The RuvA-RuvB-RuvC complex processes Holliday junction (HJ) DNA during genetic recombination and DNA repair, while the RuvA-RuvB complex plays an important role in the rescue of blocked DNA replication forks via replication fork reversal (RFR). RuvA specifically binds to HJ cruciform DNA, conferring on it an open structure. The RuvB hexamer acts as an ATP-dependent pump, pulling dsDNA into and through the RuvAB complex. HJ branch migration allows RuvC to scan DNA until it finds its consensus sequence, where it cleaves and resolves the cruciform DNA. The polypeptide is Holliday junction branch migration complex subunit RuvA (Citrobacter koseri (strain ATCC BAA-895 / CDC 4225-83 / SGSC4696)).